A 173-amino-acid chain; its full sequence is Small ribosomal subunit protein uS5 (173 aa).

In terms of domain architecture, S5 DRBM spans 16–79 (LSELLVSVRR…NAAKKNMIRV (64 aa)).

Belongs to the universal ribosomal protein uS5 family. Part of the 30S ribosomal subunit. Contacts proteins S4 and S8.

With S4 and S12 plays an important role in translational accuracy. Functionally, located at the back of the 30S subunit body where it stabilizes the conformation of the head with respect to the body. The sequence is that of Small ribosomal subunit protein uS5 from Anaplasma phagocytophilum (strain HZ).